The primary structure comprises 332 residues: NADH-quinone oxidoreductase subunit H (332 aa).

Transmembrane regions (helical) follow at residues 8–28 (IIECILKIIVVLLIFSALAGF), 44–66 (IGPNYVGPYGLLQVVADGIKLFA), 78–98 (PIFILAPSIAAITAFIAMAPI), 120–140 (VGILFVLAVSSCGIYAPLLAG), 157–177 (IQFLSFEVITILSLLAPLMII), 196–216 (WLIFKQPLAFGLFIIAAYVEL), 245–265 (MFFIGEYANMFATAFILSLVF), 274–294 (FIPGGIAILLKVCFFIFLFMW), and 312–332 (WKIMLPLALLNVLITGCILLF).

Belongs to the complex I subunit 1 family. NDH-1 is composed of 14 different subunits. Subunits NuoA, H, J, K, L, M, N constitute the membrane sector of the complex.

The protein resides in the cell inner membrane. The catalysed reaction is a quinone + NADH + 5 H(+)(in) = a quinol + NAD(+) + 4 H(+)(out). Functionally, NDH-1 shuttles electrons from NADH, via FMN and iron-sulfur (Fe-S) centers, to quinones in the respiratory chain. The immediate electron acceptor for the enzyme in this species is believed to be ubiquinone. Couples the redox reaction to proton translocation (for every two electrons transferred, four hydrogen ions are translocated across the cytoplasmic membrane), and thus conserves the redox energy in a proton gradient. This subunit may bind ubiquinone. The polypeptide is NADH-quinone oxidoreductase subunit H (Helicobacter hepaticus (strain ATCC 51449 / 3B1)).